Consider the following 131-residue polypeptide: Fumarate reductase subunit C (131 aa).

A run of 3 helical transmembrane segments spans residues 30-50 (EGTCLPQLWFSLVVLFGVFAL), 58-78 (AGFVGFLSNPILMLINIVTLI), and 109-129 (IVRGLWGLTIVVTVVILAVAL).

Belongs to the FrdC family. Part of an enzyme complex containing four subunits: a flavoprotein (FrdA), an iron-sulfur protein (FrdB), and two hydrophobic anchor proteins (FrdC and FrdD).

It localises to the cell inner membrane. In terms of biological role, two distinct, membrane-bound, FAD-containing enzymes are responsible for the catalysis of fumarate and succinate interconversion; fumarate reductase is used in anaerobic growth, and succinate dehydrogenase is used in aerobic growth. Anchors the catalytic components of the fumarate reductase complex to the cell inner membrane, binds quinones. This Proteus vulgaris protein is Fumarate reductase subunit C.